The sequence spans 309 residues: Sulfate adenylyltransferase subunit 2 (309 aa).

The protein belongs to the PAPS reductase family. CysD subfamily. Heterodimer composed of CysD, the smaller subunit, and CysN.

It carries out the reaction sulfate + ATP + H(+) = adenosine 5'-phosphosulfate + diphosphate. It participates in sulfur metabolism; hydrogen sulfide biosynthesis; sulfite from sulfate: step 1/3. With CysN forms the ATP sulfurylase (ATPS) that catalyzes the adenylation of sulfate producing adenosine 5'-phosphosulfate (APS) and diphosphate, the first enzymatic step in sulfur assimilation pathway. APS synthesis involves the formation of a high-energy phosphoric-sulfuric acid anhydride bond driven by GTP hydrolysis by CysN coupled to ATP hydrolysis by CysD. This Methylorubrum extorquens (strain CM4 / NCIMB 13688) (Methylobacterium extorquens) protein is Sulfate adenylyltransferase subunit 2.